The chain runs to 543 residues: CTP synthase (543 aa).

The segment at 1 to 265 (MARYIFITGG…DDEVLAAFAI (265 aa)) is amidoligase domain. CTP is bound at residue S13. S13 serves as a coordination point for UTP. 14–19 (SLGKGL) provides a ligand contact to ATP. Y54 provides a ligand contact to L-glutamine. Position 71 (D71) interacts with ATP. Mg(2+) is bound by residues D71 and E139. CTP is bound by residues 146–148 (DIE), 186–191 (KTKPTQ), and K222. UTP contacts are provided by residues 186–191 (KTKPTQ) and K222. 238 to 240 (RDA) serves as a coordination point for ATP. The 252-residue stretch at 291–542 (TIAIVGKYTG…IEAALVRSRL (252 aa)) folds into the Glutamine amidotransferase type-1 domain. G353 contacts L-glutamine. The active-site Nucleophile; for glutamine hydrolysis is C380. L-glutamine contacts are provided by residues 381–384 (FGMQ), E404, and R470. Residues H515 and E517 contribute to the active site.

The protein belongs to the CTP synthase family. In terms of assembly, homotetramer.

It catalyses the reaction UTP + L-glutamine + ATP + H2O = CTP + L-glutamate + ADP + phosphate + 2 H(+). It carries out the reaction L-glutamine + H2O = L-glutamate + NH4(+). The catalysed reaction is UTP + NH4(+) + ATP = CTP + ADP + phosphate + 2 H(+). Its pathway is pyrimidine metabolism; CTP biosynthesis via de novo pathway; CTP from UDP: step 2/2. Its activity is regulated as follows. Allosterically activated by GTP, when glutamine is the substrate; GTP has no effect on the reaction when ammonia is the substrate. The allosteric effector GTP functions by stabilizing the protein conformation that binds the tetrahedral intermediate(s) formed during glutamine hydrolysis. Inhibited by the product CTP, via allosteric rather than competitive inhibition. Functionally, catalyzes the ATP-dependent amination of UTP to CTP with either L-glutamine or ammonia as the source of nitrogen. Regulates intracellular CTP levels through interactions with the four ribonucleotide triphosphates. The polypeptide is CTP synthase (Rhodopseudomonas palustris (strain BisB5)).